We begin with the raw amino-acid sequence, 245 residues long: tRNA1(Val) (adenine(37)-N6)-methyltransferase (245 aa).

It belongs to the methyltransferase superfamily. tRNA (adenine-N(6)-)-methyltransferase family.

The protein localises to the cytoplasm. The enzyme catalyses adenosine(37) in tRNA1(Val) + S-adenosyl-L-methionine = N(6)-methyladenosine(37) in tRNA1(Val) + S-adenosyl-L-homocysteine + H(+). In terms of biological role, specifically methylates the adenine in position 37 of tRNA(1)(Val) (anticodon cmo5UAC). The chain is tRNA1(Val) (adenine(37)-N6)-methyltransferase from Shigella boydii serotype 18 (strain CDC 3083-94 / BS512).